Consider the following 432-residue polypeptide: D-amino acid dehydrogenase (432 aa).

3–17 (VVVLGSGVVGVASAW) provides a ligand contact to FAD.

Belongs to the DadA oxidoreductase family. FAD is required as a cofactor.

It catalyses the reaction a D-alpha-amino acid + A + H2O = a 2-oxocarboxylate + AH2 + NH4(+). Its pathway is amino-acid degradation; D-alanine degradation; NH(3) and pyruvate from D-alanine: step 1/1. Functionally, oxidative deamination of D-amino acids. This Cronobacter sakazakii (strain ATCC BAA-894) (Enterobacter sakazakii) protein is D-amino acid dehydrogenase.